Here is a 419-residue protein sequence, read N- to C-terminus: LanC-like protein 3 homolog (419 aa).

It belongs to the LanC-like protein family.

The sequence is that of LanC-like protein 3 homolog from Drosophila melanogaster (Fruit fly).